A 239-amino-acid chain; its full sequence is Mannose-P-dolichol utilization defect 1 protein homolog 1 (239 aa).

The next 6 membrane-spanning stretches (helical) occupy residues 25 to 45 (CLLP…SMTV), 62 to 82 (LSVV…AYCL), 91 to 111 (FGEL…IYYF), 123 to 143 (AILY…PFLF), 174 to 194 (LSFL…FTSI), and 202 to 222 (MLLG…QILL). Residues 27–93 (LPLISKLLGY…KDLPFSAFGE (67 aa)) form the PQ-loop 1 domain. The PQ-loop 2 domain occupies 150 to 205 (KHLIFLSARIPQIWKNFRNKSTGQLSFLTCLMNFGGALARVFTSIQEKAPLSMLLG).

This sequence belongs to the MPDU1 (TC 2.A.43.3) family.

The protein localises to the membrane. The protein is Mannose-P-dolichol utilization defect 1 protein homolog 1 of Arabidopsis thaliana (Mouse-ear cress).